A 585-amino-acid chain; its full sequence is Zinc finger protein 614 (585 aa).

In terms of domain architecture, KRAB spans 8 to 79 (LTLEDVAVEF…DAKIQNKNCP (72 aa)). The C2H2-type 1; atypical zinc finger occupies 205 to 227 (HACIECEQTFLRKSQLIYHENIC). The segment at 257–281 (KICIPNEYRKGSTVKSSLITHQQTH) adopts a C2H2-type 2; degenerate zinc-finger fold. 10 C2H2-type zinc fingers span residues 287–309 (YMCS…QRTH), 315–337 (YVCK…QRTH), 343–365 (YICS…QRTH), 371–393 (YMCS…QRSH), 399–421 (YICS…QRTH), 427–449 (YICN…QRTH), 455–477 (YECN…ERCH), 483–505 (FVCT…QRIH), 511–533 (YECN…QRTH), and 539–561 (YGCS…KKMH).

This sequence belongs to the krueppel C2H2-type zinc-finger protein family.

It is found in the nucleus. Functionally, may be involved in transcriptional regulation. This chain is Zinc finger protein 614 (ZNF614), found in Homo sapiens (Human).